The sequence spans 65 residues: Defensin-B2 (65 aa).

The signal sequence occupies residues 1-23; that stretch reads MEARVLLLCAVLFLLVHTPPAAG. Intrachain disulfides connect C29–C56, C36–C50, and C40–C57.

This sequence belongs to the beta-defensin family. As to expression, lowly expressed in spleen, and lung.

It localises to the secreted. In terms of biological role, has antimicrobial activity. This Ornithorhynchus anatinus (Duckbill platypus) protein is Defensin-B2.